We begin with the raw amino-acid sequence, 126 residues long: Large ribosomal subunit protein bL12 (126 aa).

Low complexity predominate over residues 36 to 55 (APAPAAAPAAGGDQGGAEAA). The tract at residues 36-57 (APAPAAAPAAGGDQGGAEAAEQ) is disordered.

It belongs to the bacterial ribosomal protein bL12 family. As to quaternary structure, homodimer. Part of the ribosomal stalk of the 50S ribosomal subunit. Forms a multimeric L10(L12)X complex, where L10 forms an elongated spine to which 2 to 4 L12 dimers bind in a sequential fashion. Binds GTP-bound translation factors.

Its function is as follows. Forms part of the ribosomal stalk which helps the ribosome interact with GTP-bound translation factors. Is thus essential for accurate translation. The protein is Large ribosomal subunit protein bL12 of Natranaerobius thermophilus (strain ATCC BAA-1301 / DSM 18059 / JW/NM-WN-LF).